The following is a 546-amino-acid chain: Smad protein daf-8 (546 aa).

The 122-residue stretch at 16-137 (AMAQKVLEET…YRWVELPTCQ (122 aa)) folds into the MH1 domain. 2 disordered regions span residues 234-268 (LQQS…FIPN) and 292-317 (ENFS…PIEP). Over residues 292-302 (ENFSSENNGNR) the composition is skewed to polar residues. One can recognise an MH2 domain in the interval 349–546 (WLKLIYYEEG…APPRICSSRT (198 aa)).

Belongs to the dwarfin/SMAD family. In terms of assembly, homodimer. Interacts with R-SMAD daf-14 and co-SMAD daf-3. Interacts with orphan nuclear receptor nhr-69. Expressed in the excretory cell and gonadal distal tip cells (DTCs).

It localises to the cytoplasm. The protein resides in the nucleus. Probably a receptor-regulated SMAD (R-SMAD) that is an intracellular signal transducer and transcriptional modulator activated by TGF-beta-like daf-7 signaling. Plays a role in TGF-beta-like daf-7 signaling in regulating entry into a developmentally arrested larval state known as dauer, in response to harsh environmental conditions; partially redundant with R-SMAD daf-14. Plays a role in inhibiting mitosis and promoting a switch to meiosis in the germ line, perhaps by down-regulating lag-2 transcription in the gonadal distal tip cells (DTCs). In cooperation with orphan nuclear receptor nhr-69 modulates the Insulin/IGF-1-like signaling (IIS) pathway, perhaps by regulating expression of the potassium channel exp-2, which in turn modulates the secretion of the insulin-like peptide daf-28. In Caenorhabditis elegans, this protein is Smad protein daf-8.